The chain runs to 308 residues: tRNA dimethylallyltransferase (308 aa).

An ATP-binding site is contributed by 14 to 21 (GPTASGKS). Substrate is bound at residue 16 to 21 (TASGKS). An interaction with substrate tRNA region spans residues 39–42 (DSMQ).

It belongs to the IPP transferase family. In terms of assembly, monomer. Requires Mg(2+) as cofactor.

The catalysed reaction is adenosine(37) in tRNA + dimethylallyl diphosphate = N(6)-dimethylallyladenosine(37) in tRNA + diphosphate. Functionally, catalyzes the transfer of a dimethylallyl group onto the adenine at position 37 in tRNAs that read codons beginning with uridine, leading to the formation of N6-(dimethylallyl)adenosine (i(6)A). The polypeptide is tRNA dimethylallyltransferase (Bradyrhizobium sp. (strain ORS 278)).